Consider the following 226-residue polypeptide: ATP-dependent dethiobiotin synthetase BioD (226 aa).

12-17 provides a ligand contact to ATP; the sequence is GVGKTV. Thr16 is a Mg(2+) binding site. The active site involves Lys37. Thr41 is a substrate binding site. ATP-binding positions include Asp49, 108–111, 169–170, and 197–199; these read EGAG, GS, and PAG. Positions 49 and 108 each coordinate Mg(2+).

It belongs to the dethiobiotin synthetase family. As to quaternary structure, homodimer. It depends on Mg(2+) as a cofactor.

It is found in the cytoplasm. The enzyme catalyses (7R,8S)-7,8-diammoniononanoate + CO2 + ATP = (4R,5S)-dethiobiotin + ADP + phosphate + 3 H(+). It functions in the pathway cofactor biosynthesis; biotin biosynthesis; biotin from 7,8-diaminononanoate: step 1/2. In terms of biological role, catalyzes a mechanistically unusual reaction, the ATP-dependent insertion of CO2 between the N7 and N8 nitrogen atoms of 7,8-diaminopelargonic acid (DAPA, also called 7,8-diammoniononanoate) to form a ureido ring. The sequence is that of ATP-dependent dethiobiotin synthetase BioD from Mycobacterium leprae (strain Br4923).